We begin with the raw amino-acid sequence, 33 residues long: Photosystem II reaction center protein Psb30 (33 aa).

The chain crosses the membrane as a helical span at residues 5-25; it reads LIGQLVTVALVVGAGPIIIGA.

This sequence belongs to the Psb30/Ycf12 family. In terms of assembly, PSII is composed of 1 copy each of membrane proteins PsbA, PsbB, PsbC, PsbD, PsbE, PsbF, PsbH, PsbI, PsbJ, PsbK, PsbL, PsbM, PsbT, PsbX, PsbY, PsbZ, Psb30/Ycf12, peripheral proteins of the oxygen-evolving complex and a large number of cofactors. It forms dimeric complexes.

Its subcellular location is the plastid. It localises to the chloroplast thylakoid membrane. A core subunit of photosystem II (PSII), probably helps stabilize the reaction center. This Ostreococcus tauri protein is Photosystem II reaction center protein Psb30.